A 282-amino-acid chain; its full sequence is Parvulin-like PPIase (282 aa).

The signal sequence occupies residues 1-20 (MKKLSVIFLSVSMLSGIAFA). The region spanning 138–231 (KEQIKVAHIL…FGWHIIKVLE (94 aa)) is the PpiC domain.

It belongs to the PpiC/parvulin rotamase family.

It localises to the cell outer membrane. It catalyses the reaction [protein]-peptidylproline (omega=180) = [protein]-peptidylproline (omega=0). This is Parvulin-like PPIase (plp) from Rickettsia felis (strain ATCC VR-1525 / URRWXCal2) (Rickettsia azadi).